Here is a 127-residue protein sequence, read N- to C-terminus: HTH-type transcriptional regulator ImmR (127 aa).

The segment covering 1–12 (MSLGKRLKEARQ) has biased composition (basic and acidic residues). Residues 1-22 (MSLGKRLKEARQKAGYTQKEAA) form a disordered region. The 55-residue stretch at 7 to 61 (LKEARQKAGYTQKEAAEKLNIGNNNLSNYERDYRDPDTDTLLKLSNLYNVSTDYL) folds into the HTH cro/C1-type domain. A DNA-binding region (H-T-H motif) is located at residues 18–37 (QKEAAEKLNIGNNNLSNYER).

The protein is HTH-type transcriptional regulator ImmR (immR) of Bacillus subtilis (strain 168).